Reading from the N-terminus, the 229-residue chain is Ribose-5-phosphate isomerase A (229 aa).

Residues 28 to 31, 84 to 87, and 97 to 100 each bind substrate; these read TGST, DGAD, and KGGG. E106 serves as the catalytic Proton acceptor. K124 contributes to the substrate binding site.

Belongs to the ribose 5-phosphate isomerase family. In terms of assembly, homodimer.

It catalyses the reaction aldehydo-D-ribose 5-phosphate = D-ribulose 5-phosphate. Its pathway is carbohydrate degradation; pentose phosphate pathway; D-ribose 5-phosphate from D-ribulose 5-phosphate (non-oxidative stage): step 1/1. Catalyzes the reversible conversion of ribose-5-phosphate to ribulose 5-phosphate. The sequence is that of Ribose-5-phosphate isomerase A from Lacticaseibacillus paracasei (strain ATCC 334 / BCRC 17002 / CCUG 31169 / CIP 107868 / KCTC 3260 / NRRL B-441) (Lactobacillus paracasei).